Consider the following 588-residue polypeptide: Probable G-protein coupled receptor 162 (588 aa).

The Extracellular segment spans residues 1–17 (MARGGLGAEEASLRSNA). Residues 18–38 (LSWLACGLLALLANAWIILSI) form a helical membrane-spanning segment. The Cytoplasmic portion of the chain corresponds to 39–49 (SAKQQKHKPLE). The chain crosses the membrane as a helical span at residues 50-70 (LLLCFLAGTHILMAAVPLTTF). Over 71-91 (AVVQLRRQASSDYDWNESICK) the chain is Extracellular. N-linked (GlcNAc...) asparagine glycosylation is present at Asn-86. A helical transmembrane segment spans residues 92 to 112 (VFVSTYYTLALATCFTVASLS). The Cytoplasmic portion of the chain corresponds to 113–133 (YHRMWMVRWPVNYRLSNAKKQ). Residues 134-154 (ALHAVMGIWMVSFILSTLPSI) form a helical membrane-spanning segment. Over 155 to 174 (GWHNNGERYYARGCQFIVSK) the chain is Extracellular. The chain crosses the membrane as a helical span at residues 175-195 (IGLGFGVCFSLLLLGGIVMGL). The Cytoplasmic portion of the chain corresponds to 196–275 (VCVAITFYQT…SLQVTNLVSA (80 aa)). Residues 276–296 (IVFLYDSLTGVPILVVSFFSL) traverse the membrane as a helical segment. The Extracellular segment spans residues 297-303 (KSDSAPP). A helical transmembrane segment spans residues 304–324 (WMVLAVLWCSMAQTLLLPSFI). Residues 325-588 (WSCERYRADV…GNPIFPQLTL (264 aa)) are Cytoplasmic-facing. Phosphoserine occurs at positions 413 and 435. Disordered stretches follow at residues 511 to 545 (ETPL…SPDS) and 561 to 588 (SLTG…QLTL). The span at 514-525 (LPSPTASPGPSP) shows a compositional bias: pro residues. Residues 530–540 (PLGFSPRRLSL) are compositionally biased toward low complexity.

Belongs to the G-protein coupled receptor 1 family.

It localises to the cell membrane. Orphan receptor. This chain is Probable G-protein coupled receptor 162 (Gpr162), found in Mus musculus (Mouse).